A 676-amino-acid polypeptide reads, in one-letter code: Long-chain-fatty-acid--CoA ligase 1 (676 aa).

Position 246-257 (246-257 (YTSGSTGLPKGV)) interacts with ATP. The FACS signature appears at 511–560 (DGWFRTGDVGELTPEGLLRIIDRKKNLVKTQNGEYIALEKLESRYRTSSL).

Belongs to the ATP-dependent AMP-binding enzyme family. Mg(2+) is required as a cofactor.

It catalyses the reaction a long-chain fatty acid + ATP + CoA = a long-chain fatty acyl-CoA + AMP + diphosphate. Functionally, esterification, concomitant with transport, of exogenous long-chain fatty acids into metabolically active CoA thioesters for subsequent degradation or incorporation into phospholipids. It may supplement intracellular myristoyl-CoA pools from exogenous myristate. Preferentially acts on C12:0-C16:0 fatty acids with myristic and pentadecanic acid (C15:0) having the highest activities. Appears to play a role in the maintenance of cell viability during stationary phase. In Schizosaccharomyces pombe (strain 972 / ATCC 24843) (Fission yeast), this protein is Long-chain-fatty-acid--CoA ligase 1 (lcf1).